Consider the following 3072-residue polypeptide: E1A-binding protein p400 (3072 aa).

Positions 1-22 (MHHGSGPQNVQHQLQRSRSFTG) are enriched in polar residues. 3 disordered regions span residues 1–55 (MHHG…SPGY), 125–149 (PMSQQVQTQSPTQPSPGPGQTLQNV), and 222–250 (LSQPHAQSGGTIHHLGPQSPAAAGGTGLQ). Over residues 31-40 (PNLPPSPAAP) the composition is skewed to pro residues. Low complexity-rich tracts occupy residues 41-53 (FAPSASPSAPQSP) and 125-136 (PMSQQVQTQSPT). A phosphoserine mark is found at Ser52 and Ser134. Phosphoserine is present on residues Ser315 and Ser321. 3 disordered regions span residues 485–519 (SLTGSLVVGPGSATEADPFKRQQVMPPTEQSKRPR), 544–601 (MPTV…ASVP), and 635–769 (APIP…SQDK). Over residues 556–569 (QATQLTGQKQSQQQ) the composition is skewed to low complexity. Residues 570-583 (YDPSTGPPVQNAAS) show a composition bias toward polar residues. Positions 586–599 (TPPPQLPARLPPAS) are enriched in pro residues. Composition is skewed to low complexity over residues 646–657 (PAPSSQPAQPAL), 668–682 (QTSQLSSQTQTVAST), and 695–710 (SLPTSSSSSSLVPVSG). 2 stretches are compositionally biased toward polar residues: residues 724-741 (NRPSSATNKALSPITSRS) and 754-765 (SPAQNAASSQDG). Residues Ser735, Ser741, and Ser754 each carry the phosphoserine modification. One can recognise an HSA domain in the interval 798-870 (LPKLQEAPRP…EQSRLRRIAA (73 aa)). The segment covering 914 to 928 (ESRLKGFDTSPEHSL) has biased composition (basic and acidic residues). Disordered regions lie at residues 914–952 (ESRLKGFDTSPEHSLDLGISGRKRKASTSLTDDEVEDEE) and 997–1024 (FQWPQPEPDHEESSGEEDVEDCPSDRES). At Thr922 the chain carries Phosphothreonine. Phosphoserine occurs at positions 923, 927, and 940. Position 944 is a phosphothreonine (Thr944). Residues 950-1364 (DEEETIEEEE…SVLSVLTRLQ (415 aa)) are interactions with RUVBL1 and RUVBL2. A phosphoserine mark is found at Ser1009 and Ser1010. Positions 1102 to 1267 (AKLYRKNLNG…WTMVHFLIPG (166 aa)) constitute a Helicase ATP-binding domain. Residue 1115–1122 (DEAGLGKT) coordinates ATP. A DEAD box-like motif is present at residues 1218–1221 (DEMQ). Lys1471 is modified (N6-acetyllysine). The interval 1473 to 1503 (EGRTVAFPSTHPPRMANTNTSTATPQGQVRG) is disordered. A compositionally biased stretch (polar residues) spans 1488-1499 (ANTNTSTATPQG). Ser1646 and Ser1650 each carry phosphoserine. In terms of domain architecture, Helicase C-terminal spans 1815–1972 (KLEALAILLQ…GNDYSMAFLT (158 aa)). Disordered stretches follow at residues 2033-2062 (AQRSTEEAVPGSSSVAVSSDSDGSRYDEEP) and 2203-2227 (KERKRHKTDPSAAGRKKKQRHGEAV). A compositionally biased stretch (low complexity) spans 2043–2053 (GSSSVAVSSDS). N6-acetyllysine is present on residues Lys2265 and Lys2272. Residues 2276–2345 (EPAQDSPDWL…QCRNRYENVI (70 aa)) form the Myb-like domain. The interaction with ZNF42 stretch occupies residues 2440–2699 (KEKKALADQQ…QQQQQQQQQT (260 aa)). The disordered stretch occupies residues 2441-2534 (EKKALADQQK…PQSKGQPTMT (94 aa)). Low complexity-rich tracts occupy residues 2446-2455 (ADQQKAQQPP) and 2463-2478 (QQQQQQQQQQQQQQQQ). Residues 2479-2493 (QPPPPPQQPPPPVPQ) are compositionally biased toward pro residues. Positions 2494–2526 (PQAASSQTPAGQPAVQPQPQPQVQTQPQPVQPQ) are enriched in low complexity. A Phosphoserine modification is found at Ser2614. Disordered regions lie at residues 2734-2790 (QKMQ…TGTT) and 3028-3072 (ASLQ…PPCQ). Residues 2739-2754 (PPQPPPPQAQPGPPQQ) are compositionally biased toward pro residues. Positions 2755–2775 (PAQVQVQTPQPPQQQQSPQLT) are enriched in low complexity. Polar residues predominate over residues 3042–3053 (PASSDSPSQQPK).

The protein belongs to the SNF2/RAD54 helicase family. SWR1 subfamily. In terms of assembly, component of the NuA4 histone acetyltransferase complex which contains the catalytic subunit KAT5/TIP60 and the subunits EP400, TRRAP/PAF400, BRD8/SMAP, EPC1, DMAP1/DNMAP1, RUVBL1/TIP49, RUVBL2, ING3, actin, ACTL6A/BAF53A, MORF4L1/MRG15, MORF4L2/MRGX, MRGBP, YEATS4/GAS41, VPS72/YL1 and MEAF6. May also participate in the formation of NuA4 related complexes which lack the KAT5/TIP60 catalytic subunit, but which include the SWI/SNF related protein SRCAP. The NuA4 complex interacts with MYC. EP400 interacts with TRRAP, RUVBL1 and RUVBL2. Component of a SWR1-like complex. Interacts with ZNF42. Interacts with PHF5A. As to expression, expressed in brain, thymus, lung, liver, spleen, kidney, colon and bone marrow.

The protein localises to the nucleus. In terms of biological role, component of the NuA4 histone acetyltransferase complex which is involved in transcriptional activation of select genes principally by acetylation of nucleosomal histones H4 and H2A. This modification may both alter nucleosome - DNA interactions and promote interaction of the modified histones with other proteins which positively regulate transcription. May be required for transcriptional activation of E2F1 and MYC target genes during cellular proliferation. The NuA4 complex ATPase and helicase activities seem to be, at least in part, contributed by the association of RUVBL1 and RUVBL2 with EP400. Component of a SWR1-like complex that specifically mediates the removal of histone H2A.Z/H2AZ1 from the nucleosome. Regulates transcriptional activity of ZNF42. The chain is E1A-binding protein p400 (Ep400) from Mus musculus (Mouse).